The following is a 1417-amino-acid chain: Cytoadherence-linked asexual protein 3.1 (1417 aa).

Positions M1–C24 are cleaved as a signal peptide. Disulfide bonds link C333–C361, C407–C413, C517–C545, and C521–C542. The helical transmembrane segment at L1204 to F1224 threads the bilayer. The segment at T1383 to H1417 is disordered. Acidic residues predominate over residues D1394 to L1411.

Self-associates. Component of the RhopH complex. RhopH complex is at least composed of CLAG3.1/CLAG3.2, RhopH2 and RhopH3 with a 1:1:1 subunit stoichiometry. CLAG3.1/CLAG3.2 mediates subunit association through independent contacts with RhopH2 and RhopH3, which do not directly interact with one another. Interacts with RhopH2. Interacts with RhopH3.

It is found in the host cell membrane. It localises to the host cytoplasm. Its subcellular location is the cytoplasmic vesicle. The protein localises to the secretory vesicle. The protein resides in the rhoptry. Its function is as follows. Participates in the formation of new permeability pathways in Plasmodium-infected erythrocytes enabling the uptake of nutrients from the blood plasma. In Plasmodium falciparum, this protein is Cytoadherence-linked asexual protein 3.1.